The chain runs to 457 residues: tRNA modification GTPase MnmE (457 aa).

(6S)-5-formyl-5,6,7,8-tetrahydrofolate is bound by residues Arg-25, Glu-87, and Arg-126. Residues 223-377 (GISTAIIGRP…IEERINNLFF (155 aa)) enclose the TrmE-type G domain. Asn-233 provides a ligand contact to K(+). Residues 233 to 238 (NVGKSS), 252 to 258 (TDIAGTT), and 277 to 280 (DTAG) contribute to the GTP site. Residue Ser-237 coordinates Mg(2+). Positions 252, 254, and 257 each coordinate K(+). Thr-258 serves as a coordination point for Mg(2+). Residue Lys-457 participates in (6S)-5-formyl-5,6,7,8-tetrahydrofolate binding.

Belongs to the TRAFAC class TrmE-Era-EngA-EngB-Septin-like GTPase superfamily. TrmE GTPase family. In terms of assembly, homodimer. Heterotetramer of two MnmE and two MnmG subunits. It depends on K(+) as a cofactor.

It localises to the cytoplasm. Exhibits a very high intrinsic GTPase hydrolysis rate. Involved in the addition of a carboxymethylaminomethyl (cmnm) group at the wobble position (U34) of certain tRNAs, forming tRNA-cmnm(5)s(2)U34. The protein is tRNA modification GTPase MnmE of Streptococcus pneumoniae serotype 2 (strain D39 / NCTC 7466).